The chain runs to 195 residues: Imidazoleglycerol-phosphate dehydratase (195 aa).

This sequence belongs to the imidazoleglycerol-phosphate dehydratase family.

It is found in the cytoplasm. It carries out the reaction D-erythro-1-(imidazol-4-yl)glycerol 3-phosphate = 3-(imidazol-4-yl)-2-oxopropyl phosphate + H2O. It functions in the pathway amino-acid biosynthesis; L-histidine biosynthesis; L-histidine from 5-phospho-alpha-D-ribose 1-diphosphate: step 6/9. The chain is Imidazoleglycerol-phosphate dehydratase from Haloarcula marismortui (strain ATCC 43049 / DSM 3752 / JCM 8966 / VKM B-1809) (Halobacterium marismortui).